Consider the following 95-residue polypeptide: Corticostatin-3 (95 aa).

Positions 1 to 19 (MRTLALLAAILLVALQAQA) are cleaved as a signal peptide. Positions 20–62 (EHVSVSIDEVVDQQPPQAEDQDVAIYVKEHESSALEALGVKAG) are excised as a propeptide. Intrachain disulfides connect Cys65–Cys93, Cys67–Cys82, and Cys72–Cys92.

Belongs to the alpha-defensin family.

It is found in the secreted. Its function is as follows. This peptide has antibiotic, anti-fungi and antiviral activity. It also inhibits corticotropin (ACTH) stimulated corticosterone production. This is Corticostatin-3 from Oryctolagus cuniculus (Rabbit).